A 267-amino-acid polypeptide reads, in one-letter code: Undecaprenyl-diphosphatase (267 aa).

8 helical membrane passes run methionine 1–valine 21, glycine 40–tryptophan 60, alanine 83–isoleucine 103, methionine 111–tryptophan 131, glycine 144–glycine 164, alanine 189–isoleucine 209, aspartate 219–methionine 239, and valine 245–alanine 265.

It belongs to the UppP family.

It localises to the cell inner membrane. It carries out the reaction di-trans,octa-cis-undecaprenyl diphosphate + H2O = di-trans,octa-cis-undecaprenyl phosphate + phosphate + H(+). Its function is as follows. Catalyzes the dephosphorylation of undecaprenyl diphosphate (UPP). Confers resistance to bacitracin. This chain is Undecaprenyl-diphosphatase, found in Roseobacter denitrificans (strain ATCC 33942 / OCh 114) (Erythrobacter sp. (strain OCh 114)).